A 369-amino-acid polypeptide reads, in one-letter code: 2-aminoethylphosphonate--pyruvate transaminase (369 aa).

K193 bears the N6-(pyridoxal phosphate)lysine mark.

It belongs to the class-V pyridoxal-phosphate-dependent aminotransferase family. PhnW subfamily. As to quaternary structure, homodimer. Pyridoxal 5'-phosphate serves as cofactor.

It carries out the reaction (2-aminoethyl)phosphonate + pyruvate = phosphonoacetaldehyde + L-alanine. Functionally, involved in phosphonate degradation. The polypeptide is 2-aminoethylphosphonate--pyruvate transaminase (Burkholderia mallei (strain NCTC 10247)).